Here is a 324-residue protein sequence, read N- to C-terminus: Probable UDP-sugar transporter protein SLC35A4 (324 aa).

At 1-18 (MSVEDGGMPGLSRPRQAR) the chain is on the cytoplasmic side. A helical membrane pass occupies residues 19 to 39 (WTLMLLLSTAMYGAHAPLLAL). The Lumenal segment spans residues 40 to 52 (CHVDGRVPFRPSS). The helical transmembrane segment at 53-73 (AVLLTELTKLLLCAFSLLVGW) threads the bilayer. Residues 74–85 (QAWPQGAPPWRQ) lie on the Cytoplasmic side of the membrane. A helical transmembrane segment spans residues 86–106 (AAPFALSALLYGANNNLVIYL). Over 107 to 142 (QRYMDPSTYQVLSNLKIGSTAVLYCLCLRHRLSVRQ) the chain is Lumenal. Residues 143–163 (GLALLLLMAAGACYAAGGLQV) form a helical membrane-spanning segment. Topologically, residues 164 to 180 (PGNTLPRPPPAAAASPM) are cytoplasmic. Residues 181-201 (PLHITPLGLLLLILYCLISGL) traverse the membrane as a helical segment. Over 202-214 (SSVYTELLMKRQQ) the chain is Lumenal. Residues 215–235 (LPLALQNLFLYTFGVLLNLGL) form a helical membrane-spanning segment. Topologically, residues 236–250 (HAGGGPGPGLLEGFS) are cytoplasmic. A helical transmembrane segment spans residues 251 to 271 (GWAALVVLSQALNGLLMSVVM). Over 272 to 275 (KHGS) the chain is Lumenal. A helical membrane pass occupies residues 276-298 (SITRLFVVSCSLVVNAVLSAVLL). The Cytoplasmic segment spans residues 299–324 (RLQLTAAFFLATLLIGLAMRLYYGSR).

The protein belongs to the nucleotide-sugar transporter family. SLC35A subfamily. Found in a complex with SLC35A2 and SLC35A3.

It localises to the golgi apparatus membrane. The enzyme catalyses CDP-L-ribitol(in) + CDP(out) = CDP-L-ribitol(out) + CDP(in). Functionally, mediates the transport of CDP-ribitol. Does not exhibit CMP-sialic acid, UDP-galactose and UDP-N-acetylglucosamine transport activity. This chain is Probable UDP-sugar transporter protein SLC35A4, found in Pongo abelii (Sumatran orangutan).